The sequence spans 250 residues: 2,5-dichloro-2,5-cyclohexadiene-1,4-diol dehydrogenase (250 aa).

9-34 contributes to the NAD(+) binding site; that stretch reads IIVTGGGSGIGRATVELLVASGANVA. S141 lines the substrate pocket. Y154 (proton acceptor) is an active-site residue.

This sequence belongs to the short-chain dehydrogenases/reductases (SDR) family.

The catalysed reaction is 2,5-dichlorocyclohexa-2,5-dien-1,4-diol + NAD(+) = 2,5-dichlorohydroquinone + NADH + H(+). It participates in xenobiotic degradation; gamma-hexachlorocyclohexane degradation. In terms of biological role, catalyzes the dehydrogenation of 2,5-dichloro-2,5-cyclohexadiene-1,4-diol (2,5-DDOL) to 2,5-dichlorohydroquinone (2,5-DCHQ), a step in the degradation of gamma-hexachlorocyclohexane (gamma-HCH or lindane). This is 2,5-dichloro-2,5-cyclohexadiene-1,4-diol dehydrogenase from Sphingobium indicum (strain DSM 16412 / CCM 7286 / MTCC 6364 / B90A).